Here is a 355-residue protein sequence, read N- to C-terminus: Chorismate synthase (355 aa).

Residue Arg48 coordinates NADP(+). FMN is bound by residues 125–127, 239–240, Gly280, 295–299, and Arg321; these read RSS, NA, and KPVAT.

This sequence belongs to the chorismate synthase family. As to quaternary structure, homotetramer. FMNH2 serves as cofactor.

It catalyses the reaction 5-O-(1-carboxyvinyl)-3-phosphoshikimate = chorismate + phosphate. It functions in the pathway metabolic intermediate biosynthesis; chorismate biosynthesis; chorismate from D-erythrose 4-phosphate and phosphoenolpyruvate: step 7/7. Its function is as follows. Catalyzes the anti-1,4-elimination of the C-3 phosphate and the C-6 proR hydrogen from 5-enolpyruvylshikimate-3-phosphate (EPSP) to yield chorismate, which is the branch point compound that serves as the starting substrate for the three terminal pathways of aromatic amino acid biosynthesis. This reaction introduces a second double bond into the aromatic ring system. The protein is Chorismate synthase of Flavobacterium psychrophilum (strain ATCC 49511 / DSM 21280 / CIP 103535 / JIP02/86).